The primary structure comprises 304 residues: Cbb3-type cytochrome c oxidase subunit CcoP (304 aa).

2 helical membrane passes run 11–31 (LYVA…LIVA) and 61–81 (WWAG…ALYP). 2 Cytochrome c domains span residues 129-209 (QAMA…LSLS) and 216-296 (VAAQ…WSLS). Cysteine 142, cysteine 145, histidine 146, methionine 185, cysteine 228, cysteine 231, histidine 232, and methionine 273 together coordinate heme c.

The protein belongs to the CcoP / FixP family. In terms of assembly, component of the cbb3-type cytochrome c oxidase at least composed of CcoN, CcoO, CcoQ and CcoP. Heme c serves as cofactor.

Its subcellular location is the cell inner membrane. Its pathway is energy metabolism; oxidative phosphorylation. Functionally, C-type cytochrome. Part of the cbb3-type cytochrome c oxidase complex. CcoP subunit is required for transferring electrons from donor cytochrome c via its heme groups to CcoO subunit. From there, electrons are shuttled to the catalytic binuclear center of CcoN subunit where oxygen reduction takes place. The complex also functions as a proton pump. The protein is Cbb3-type cytochrome c oxidase subunit CcoP of Rubrivivax gelatinosus (Rhodocyclus gelatinosus).